The sequence spans 1252 residues: Myosin-1 (1252 aa).

The disordered stretch occupies residues 1 to 27 (MAPSKKAGKKVTPASKKSAGQGKVAKA). Positions 38–712 (VGVSDMTLLT…TLFALETMRD (675 aa)) constitute a Myosin motor domain. An ATP-binding site is contributed by 128 to 135 (GESGAGKT). Position 356 is a phosphoserine (serine 356). The tract at residues 403–485 (IIGILDIFGF…PGIFAALNDA (83 aa)) is actin-binding. IQ domains are found at residues 716–736 (HNMAARIQRAFRNYMRYKHEC) and 737–762 (ARRIQRFWKNNKEGIAYAQTRDYGHQ). Residues 770 to 953 (RRRFSLLSYR…TVHVASGEPP (184 aa)) enclose the TH1 domain. 2 disordered regions span residues 945–1049 (VHVA…PETP) and 1103–1228 (PPKA…PATA). Pro residues-rich tracts occupy residues 989–999 (RSVPKPKPVAQ) and 1028–1046 (RPPPAPPRNIAPPPPPAKP). Residues 1046-1104 (PETPMYRAKFAFEGQEGEMSLKKDDVVELVEKDDNGWWLVKMDGVEGWAPNNYLELVPP) enclose the SH3 domain. The span at 1162 to 1175 (ADTTPASSRPSSAI) shows a compositional bias: polar residues. The span at 1178–1193 (KPPPPVAAKPKPPVIP) shows a compositional bias: pro residues. The span at 1194–1203 (VKPSVSAKGP) shows a compositional bias: low complexity. Positions 1204 to 1215 (AKPPIPTAPRPP) are enriched in pro residues. The segment covering 1216-1228 (AASTSRSSKPATA) has biased composition (low complexity).

Belongs to the TRAFAC class myosin-kinesin ATPase superfamily. Myosin family. Phosphorylation of the TEDS site (Ser-356) is required for the polarization of the actin cytoskeleton. Phosphorylation probably activates the myosin-I ATPase activity.

Its subcellular location is the cytoplasm. The protein localises to the cytoskeleton. The protein resides in the actin patch. Type-I myosin implicated in the organization of the actin cytoskeleton. Required for proper actin cytoskeleton polarization. At the cell cortex, assembles in patch-like structures together with proteins from the actin-polymerizing machinery and promotes actin assembly. Functions as actin nucleation-promoting factor (NPF) for the Arp2/3 complex. This chain is Myosin-1 (MYO1), found in Laccaria bicolor (strain S238N-H82 / ATCC MYA-4686) (Bicoloured deceiver).